Consider the following 263-residue polypeptide: Exosome complex component Rrp4 (263 aa).

The S1 motif domain occupies 51 to 127; it reads GKYIPSRKDF…KAMKVELSMR (77 aa). Positions 135–196 constitute a KH domain; that stretch reads SKGRIIEVVP…DRLTTAIEMI (62 aa). The tract at residues 213 to 263 is disordered; it reads LRGEPEGTEGSDEEQLVDEEVAGVSLEDDDVTEETSRKVDVLLDNDTDETN. Positions 218 to 245 are enriched in acidic residues; that stretch reads EGTEGSDEEQLVDEEVAGVSLEDDDVTE.

This sequence belongs to the RRP4 family. As to quaternary structure, component of the archaeal exosome complex. Forms a trimer of Rrp4 and/or Csl4 subunits. The trimer associates with a hexameric ring-like arrangement composed of 3 Rrp41-Rrp42 heterodimers.

Its subcellular location is the cytoplasm. Functionally, non-catalytic component of the exosome, which is a complex involved in RNA degradation. Increases the RNA binding and the efficiency of RNA degradation. Confers strong poly(A) specificity to the exosome. This chain is Exosome complex component Rrp4, found in Methanococcoides burtonii (strain DSM 6242 / NBRC 107633 / OCM 468 / ACE-M).